The chain runs to 177 residues: Large ribosomal subunit protein uL6 (177 aa).

The protein belongs to the universal ribosomal protein uL6 family. In terms of assembly, part of the 50S ribosomal subunit.

This protein binds to the 23S rRNA, and is important in its secondary structure. It is located near the subunit interface in the base of the L7/L12 stalk, and near the tRNA binding site of the peptidyltransferase center. In Rickettsia conorii (strain ATCC VR-613 / Malish 7), this protein is Large ribosomal subunit protein uL6.